Reading from the N-terminus, the 662-residue chain is Histone-lysine N-methyltransferase SET9 (662 aa).

The SET domain occupies 115 to 229; that stretch reads CPWEVSSTNR…AGEEITVTYG (115 aa). Disordered regions lie at residues 260–437, 484–516, and 601–662; these read VPVQ…SLDT, EEGQ…VRTP, and RVRN…FLDP. 3 stretches are compositionally biased toward polar residues: residues 304–326, 355–379, and 398–437; these read KANS…SIDQ, VSDS…TDVT, and KKQN…SLDT. The segment covering 647–656 has biased composition (basic residues); sequence RRSGRLRRVN.

It belongs to the class V-like SAM-binding methyltransferase superfamily. Histone-lysine methyltransferase family. Suvar4-20 subfamily.

The protein localises to the nucleus. It localises to the chromosome. It catalyses the reaction L-lysyl(20)-[histone H4] + 3 S-adenosyl-L-methionine = N(6),N(6),N(6)-trimethyl-L-lysyl(20)-[histone H4] + 3 S-adenosyl-L-homocysteine + 3 H(+). Functionally, histone methyltransferase that trimethylates 'Lys-20' of histone H4 to form H4K20me3. This chain is Histone-lysine N-methyltransferase SET9 (SET9), found in Gibberella zeae (strain ATCC MYA-4620 / CBS 123657 / FGSC 9075 / NRRL 31084 / PH-1) (Wheat head blight fungus).